Here is a 158-residue protein sequence, read N- to C-terminus: Secreted RxLR effector protein 2 (158 aa).

Positions 1 to 21 (MRLLLWVLLVTLVTFLSSGDA) are cleaved as a signal peptide. Residues 54–75 (RFLRGDRSNIVNLKDGDENEER) carry the RxLR-dEER motif.

The protein belongs to the RxLR effector family.

The protein localises to the secreted. Its subcellular location is the host cell. In terms of biological role, secreted effector that completely suppresses elicitor-induced cell death in host and enhances virulence of P.parasitica. In Phytophthora nicotianae (Potato buckeye rot agent), this protein is Secreted RxLR effector protein 2.